Reading from the N-terminus, the 122-residue chain is MAEVPGTSSETITETVQTGTPPPPQQEGRSLTIKLRKRKTEKKVEWSSDTVDNEHLGRRSSKCCCIYEKPRQFGESSSESEGDDEEGCGSAHCILGHGRRGHGQREGGGTTVPPSSGGTNPH.

The segment covering 1–12 (MAEVPGTSSETI) has biased composition (polar residues). Positions 1 to 33 (MAEVPGTSSETITETVQTGTPPPPQQEGRSLTI) are disordered. Threonine 20 carries the post-translational modification Phosphothreonine. Residues 55 to 65 (HLGRRSSKCCC) form an atypical RING finger domain 1 region. Positions 72-122 (QFGESSSESEGDDEEGCGSAHCILGHGRRGHGQREGGGTTVPPSSGGTNPH) are disordered. Positions 78–87 (SESEGDDEEG) are enriched in acidic residues. The tract at residues 88–97 (CGSAHCILGH) is atypical RING finger domain 2. Positions 111 to 122 (TVPPSSGGTNPH) are enriched in low complexity.

The catalysed reaction is S-ubiquitinyl-[E2 ubiquitin-conjugating enzyme]-L-cysteine + [acceptor protein]-L-lysine = [E2 ubiquitin-conjugating enzyme]-L-cysteine + N(6)-ubiquitinyl-[acceptor protein]-L-lysine.. Its pathway is protein modification; protein ubiquitination. Its function is as follows. Atypical E3 ubiquitin-protein ligase which ubiquitinates TLR2 at 'Lys-754' leading to its degradation by the proteasome. Inhibitor of protein phosphatase 1. This is E3 ubiquitin-protein ligase PPP1R11 (ppp1r11) from Danio rerio (Zebrafish).